Reading from the N-terminus, the 237-residue chain is Pyridoxine 5'-phosphate synthase (237 aa).

3-amino-2-oxopropyl phosphate contacts are provided by Asn7 and Arg18. Residue His43 is the Proton acceptor of the active site. The 1-deoxy-D-xylulose 5-phosphate site is built by Arg45 and His50. Glu70 acts as the Proton acceptor in catalysis. A 1-deoxy-D-xylulose 5-phosphate-binding site is contributed by Thr100. The active-site Proton donor is His190. Residues Asp191 and 213–214 (GH) contribute to the 3-amino-2-oxopropyl phosphate site.

This sequence belongs to the PNP synthase family. In terms of assembly, homooctamer; tetramer of dimers.

Its subcellular location is the cytoplasm. It catalyses the reaction 3-amino-2-oxopropyl phosphate + 1-deoxy-D-xylulose 5-phosphate = pyridoxine 5'-phosphate + phosphate + 2 H2O + H(+). The protein operates within cofactor biosynthesis; pyridoxine 5'-phosphate biosynthesis; pyridoxine 5'-phosphate from D-erythrose 4-phosphate: step 5/5. Its function is as follows. Catalyzes the complicated ring closure reaction between the two acyclic compounds 1-deoxy-D-xylulose-5-phosphate (DXP) and 3-amino-2-oxopropyl phosphate (1-amino-acetone-3-phosphate or AAP) to form pyridoxine 5'-phosphate (PNP) and inorganic phosphate. The polypeptide is Pyridoxine 5'-phosphate synthase (Bacteroides thetaiotaomicron (strain ATCC 29148 / DSM 2079 / JCM 5827 / CCUG 10774 / NCTC 10582 / VPI-5482 / E50)).